Reading from the N-terminus, the 193-residue chain is Probable GTP-binding protein EngB (193 aa).

Residues 22 to 193 enclose the EngB-type G domain; sequence GLPEFAFAGR…LIAVLESYLA (172 aa). GTP contacts are provided by residues 30–37, 57–61, 75–78, 142–145, and 173–175; these read GRSNVGKS, GKTQG, DLPG, TKID, and FSS. The Mg(2+) site is built by serine 37 and threonine 59.

The protein belongs to the TRAFAC class TrmE-Era-EngA-EngB-Septin-like GTPase superfamily. EngB GTPase family. The cofactor is Mg(2+).

Its function is as follows. Necessary for normal cell division and for the maintenance of normal septation. This chain is Probable GTP-binding protein EngB, found in Desulfotalea psychrophila (strain LSv54 / DSM 12343).